Consider the following 179-residue polypeptide: Shikimate kinase (179 aa).

11–16 lines the ATP pocket; that stretch reads GAGKTT. Residue threonine 15 coordinates Mg(2+). Aspartate 33, arginine 57, and glycine 79 together coordinate substrate. Residue arginine 118 participates in ATP binding. Arginine 140 serves as a coordination point for substrate.

It belongs to the shikimate kinase family. As to quaternary structure, monomer. It depends on Mg(2+) as a cofactor.

The protein resides in the cytoplasm. The catalysed reaction is shikimate + ATP = 3-phosphoshikimate + ADP + H(+). Its pathway is metabolic intermediate biosynthesis; chorismate biosynthesis; chorismate from D-erythrose 4-phosphate and phosphoenolpyruvate: step 5/7. Functionally, catalyzes the specific phosphorylation of the 3-hydroxyl group of shikimic acid using ATP as a cosubstrate. The chain is Shikimate kinase from Bacteroides fragilis (strain ATCC 25285 / DSM 2151 / CCUG 4856 / JCM 11019 / LMG 10263 / NCTC 9343 / Onslow / VPI 2553 / EN-2).